The following is a 617-amino-acid chain: Chaperone protein DnaK (617 aa).

Thr174 carries the phosphothreonine; by autocatalysis modification. Low complexity predominate over residues 575–592 (AQAQQQAQQQAQGQQGAQ). A disordered region spans residues 575–617 (AQAQQQAQQQAQGQQGAQTDNQTGQNDGKTIDVDYEEVDDDDK). Polar residues predominate over residues 593 to 602 (TDNQTGQNDG). Over residues 607 to 617 (VDYEEVDDDDK) the composition is skewed to acidic residues.

Belongs to the heat shock protein 70 family.

In terms of biological role, acts as a chaperone. The chain is Chaperone protein DnaK from Halothermothrix orenii (strain H 168 / OCM 544 / DSM 9562).